Here is a 494-residue protein sequence, read N- to C-terminus: Alpha-amylase-related protein (494 aa).

The first 20 residues, 1–20, serve as a signal peptide directing secretion; it reads MIKFALALTLCLAGASLSLA. Position 21 is a pyrrolidone carboxylic acid (Q21). An intrachain disulfide couples C48 to C104. Positions 118, 169, and 178 each coordinate Ca(2+). A disulfide bridge connects residues C157 and C171. R206 contacts chloride. Residue D208 is the Nucleophile of the active site. H212 lines the Ca(2+) pocket. E245 serves as the catalytic Proton donor. Chloride is bound by residues N308 and R343. Disulfide bonds link C376–C382, C418–C441, and C448–C460.

It belongs to the glycosyl hydrolase 13 family. Monomer. Ca(2+) is required as a cofactor. Requires chloride as cofactor.

The protein localises to the secreted. It carries out the reaction Endohydrolysis of (1-&gt;4)-alpha-D-glucosidic linkages in polysaccharides containing three or more (1-&gt;4)-alpha-linked D-glucose units.. The sequence is that of Alpha-amylase-related protein (Amyrel) from Drosophila serrata (Fruit fly).